We begin with the raw amino-acid sequence, 321 residues long: Probable UDP-sugar transporter protein SLC35A4 (321 aa).

Residues 1–22 (MYSVNIEPDGSNHSPSRKRLKQ) are Cytoplasmic-facing. The chain crosses the membrane as a helical span at residues 23–43 (ILWGLMLVLSVTIYGSHAPLI). At 44–56 (YLCKVNGEIPFSS) the chain is on the lumenal side. The chain crosses the membrane as a helical span at residues 57–77 (SAVVLLIELSKFVISLVFFLI). Topologically, residues 78-91 (QDWKSLKASVSWHL) are cytoplasmic. A helical membrane pass occupies residues 92–112 (AAPYAVPAVLYGANNNLVVYI). Residues 113 to 119 (QHFMDPS) lie on the Lumenal side of the membrane. Residues 120 to 140 (SFQVLSNLKIVSTAVLYSLFL) traverse the membrane as a helical segment. Topologically, residues 141 to 149 (RQRLSVRRW) are cytoplasmic. Residues 150–170 (LSVFLLLAAGVFYSYGGIQDL) traverse the membrane as a helical segment. Residues 171 to 180 (EKVSSDTNLY) are Lumenal-facing. Residues 181–201 (VTLPGLLLMLAYCLISGLSAV) form a helical membrane-spanning segment. Residues 202-211 (YTEMTLKTQK) lie on the Cytoplasmic side of the membrane. The helical transmembrane segment at 212–232 (IPLNMQNLYLYSFGIIINLTA) threads the bilayer. The Lumenal portion of the chain corresponds to 233–247 (HLTSSKNSDFFDGFS). A helical transmembrane segment spans residues 248 to 268 (VWVWVIILSQALNGLIMSLVM). At 269 to 321 (KLSNNITRLFIISFSMLANGFLSFILFQLQLTALFFLAVVLIGLAVYMYYGMK) the chain is on the cytoplasmic side.

The protein belongs to the nucleotide-sugar transporter family. SLC35A subfamily.

The protein resides in the golgi apparatus membrane. The catalysed reaction is CDP-L-ribitol(in) + CDP(out) = CDP-L-ribitol(out) + CDP(in). Mediates the transport of CDP-ribitol. Does not exhibit CMP-sialic acid, UDP-galactose and UDP-N-acetylglucosamine transport activity. This chain is Probable UDP-sugar transporter protein SLC35A4, found in Xenopus tropicalis (Western clawed frog).